We begin with the raw amino-acid sequence, 376 residues long: Carbohydrate sulfotransferase 14 (376 aa).

A disordered region spans residues 1–30; that stretch reads MFPRPLTPLAAPKSAETLGRTPRRAPLGRA. Residues 1–39 lie on the Cytoplasmic side of the membrane; sequence MFPRPLTPLAAPKSAETLGRTPRRAPLGRARAGLGGPPL. Over residues 18 to 30 the composition is skewed to low complexity; the sequence is LGRTPRRAPLGRA. Residues 40-60 form a helical; Signal-anchor for type II membrane protein membrane-spanning segment; sequence LLPSMLMFAVIVASSGLLLMI. Residues 61-376 lie on the Lumenal side of the membrane; that stretch reads ERGILSEMKP…PNVTKEACHQ (316 aa). A disordered region spans residues 76–96; sequence PSHKGAAWSGTDPKPRGLSLD. Asn-110 carries N-linked (GlcNAc...) asparagine glycosylation. Residues 155 to 161 and 213 to 221 contribute to the 3'-phosphoadenylyl sulfate site; these read PKVACSN and RDPLERLLS. Asn-368 carries an N-linked (GlcNAc...) asparagine glycan.

The protein belongs to the sulfotransferase 2 family.

The protein localises to the golgi apparatus membrane. It carries out the reaction dermatan + n 3'-phosphoadenylyl sulfate = dermatan 4'-sulfate + n adenosine 3',5'-bisphosphate + n H(+). Functionally, catalyzes the transfer of sulfate to position 4 of the N-acetylgalactosamine (GalNAc) residue of dermatan sulfate. Plays a pivotal role in the formation of 4-0-sulfated IdoA blocks in dermatan sulfate. Transfers sulfate to the C-4 hydroxyl of beta1,4-linked GalNAc that is substituted with an alpha-linked iduronic acid (IdoUA) at the C-3 hydroxyl. Transfers sulfate more efficiently to GalNAc residues in -IdoUA-GalNAc-IdoUA- than in -GlcUA-GalNAc-GlcUA-sequences. Has preference for partially desulfated dermatan sulfate. Addition of sulfate to GalNAc may occur immediately after epimerization of GlcUA to IdoUA. Appears to have an important role in the formation of the cerebellar neural network during postnatal brain development. The polypeptide is Carbohydrate sulfotransferase 14 (Chst14) (Mus musculus (Mouse)).